The chain runs to 500 residues: NAD(P)H-quinone oxidoreductase chain 4, chloroplastic (500 aa).

The next 14 helical transmembrane spans lie at 4–24 (FPWLTIIVVFPISAGLSIFFL), 37–57 (ICICLLELLLMTYVFCYHFQL), 87–107 (IGPILLTGFITTLATLAAWPV), 113–130 (LFHFLMLAMYSGQIGLFS), 134–154 (LLLFFLMWELELIPVYLLLSM), 167–187 (FILYTAGGSVFLLMGVLGMGL), 211–231 (ILFYFGFLIAYAVKLPIIPLH), 242–262 (HYSTCMLLAGILLKMGAYGLV), 272–292 (AHSIFSPWLVLAGTLQIIYAA), 305–325 (IAYSSVSHMGFTIIGIGSITD), 330–350 (GAILQLLSHGFLGAALFFLAG), 386–406 (LALPGMSGFVAEAVVFFGIIT), 416–436 (ILITFVMAIGMILTPIYLLSM), and 462–482 (LFVSICIFLPVIGIGIYPDFV).

This sequence belongs to the complex I subunit 4 family.

It localises to the plastid. The protein resides in the chloroplast thylakoid membrane. It carries out the reaction a plastoquinone + NADH + (n+1) H(+)(in) = a plastoquinol + NAD(+) + n H(+)(out). It catalyses the reaction a plastoquinone + NADPH + (n+1) H(+)(in) = a plastoquinol + NADP(+) + n H(+)(out). This Acorus calamus var. americanus (American sweet flag) protein is NAD(P)H-quinone oxidoreductase chain 4, chloroplastic.